A 239-amino-acid polypeptide reads, in one-letter code: Ribulose-1,5-bisphosphate 5-phosphatase (239 aa).

Asp-8 functions as the Nucleophile in the catalytic mechanism. 3 residues coordinate Mg(2+): Asp-8, Asp-10, and Asp-184. Asp-10 acts as the Proton donor in catalysis. The segment at 205–239 (PSEESDATESADRAATERQADHSIDTLGELTDLVS) is disordered. Residues 214-228 (SADRAATERQADHSI) are compositionally biased toward basic and acidic residues.

Belongs to the HAD-like hydrolase superfamily. Requires Mg(2+) as cofactor. The cofactor is Mn(2+). Co(2+) is required as a cofactor. Ni(2+) serves as cofactor.

The catalysed reaction is D-ribulose 1,5-bisphosphate + H2O = D-ribulose 1-phosphate + phosphate. Requires both monovalent and divalent ions for optimal activity. Optimal KCl concentration is higher than 2.5 M. Its function is as follows. Phosphatase involved in the non-carboxylating pentose bisphosphate pathway, a nucleoside degradation pathway present in some halophilic archaea. Catalyzes the dephosphorylation of ribulose 1,5-bisphosphate (RuBP) to ribulose 1-phosphate (Ru1P). Shows a strict substrate specificity toward RuBP. The polypeptide is Ribulose-1,5-bisphosphate 5-phosphatase (Halopiger xanaduensis (strain DSM 18323 / JCM 14033 / SH-6)).